The primary structure comprises 177 residues: Large ribosomal subunit protein uL6 (177 aa).

Belongs to the universal ribosomal protein uL6 family. As to quaternary structure, part of the 50S ribosomal subunit.

This protein binds to the 23S rRNA, and is important in its secondary structure. It is located near the subunit interface in the base of the L7/L12 stalk, and near the tRNA binding site of the peptidyltransferase center. The sequence is that of Large ribosomal subunit protein uL6 from Laribacter hongkongensis (strain HLHK9).